Reading from the N-terminus, the 297-residue chain is Probable endonuclease 4 (297 aa).

Residues histidine 69, histidine 110, glutamate 145, aspartate 179, histidine 182, histidine 214, aspartate 227, histidine 229, and glutamate 259 each contribute to the Zn(2+) site.

It belongs to the AP endonuclease 2 family. It depends on Zn(2+) as a cofactor.

It catalyses the reaction Endonucleolytic cleavage to 5'-phosphooligonucleotide end-products.. Functionally, endonuclease IV plays a role in DNA repair. It cleaves phosphodiester bonds at apurinic or apyrimidinic (AP) sites, generating a 3'-hydroxyl group and a 5'-terminal sugar phosphate. The polypeptide is Probable endonuclease 4 (Bacillus velezensis (strain DSM 23117 / BGSC 10A6 / LMG 26770 / FZB42) (Bacillus amyloliquefaciens subsp. plantarum)).